The chain runs to 420 residues: Serine hydroxymethyltransferase (420 aa).

(6S)-5,6,7,8-tetrahydrofolate-binding positions include leucine 121 and 125 to 127 (GHL). Lysine 230 carries the N6-(pyridoxal phosphate)lysine modification. 354–356 (SPF) contacts (6S)-5,6,7,8-tetrahydrofolate.

This sequence belongs to the SHMT family. As to quaternary structure, homodimer. Pyridoxal 5'-phosphate is required as a cofactor.

The protein resides in the cytoplasm. It catalyses the reaction (6R)-5,10-methylene-5,6,7,8-tetrahydrofolate + glycine + H2O = (6S)-5,6,7,8-tetrahydrofolate + L-serine. Its pathway is one-carbon metabolism; tetrahydrofolate interconversion. It participates in amino-acid biosynthesis; glycine biosynthesis; glycine from L-serine: step 1/1. In terms of biological role, catalyzes the reversible interconversion of serine and glycine with tetrahydrofolate (THF) serving as the one-carbon carrier. This reaction serves as the major source of one-carbon groups required for the biosynthesis of purines, thymidylate, methionine, and other important biomolecules. Also exhibits THF-independent aldolase activity toward beta-hydroxyamino acids, producing glycine and aldehydes, via a retro-aldol mechanism. This Rickettsia africae (strain ESF-5) protein is Serine hydroxymethyltransferase.